The primary structure comprises 329 residues: Porphobilinogen deaminase (329 aa).

The residue at position 250 (C250) is an S-(dipyrrolylmethanemethyl)cysteine.

This sequence belongs to the HMBS family. As to quaternary structure, monomer. Dipyrromethane is required as a cofactor.

The enzyme catalyses 4 porphobilinogen + H2O = hydroxymethylbilane + 4 NH4(+). It functions in the pathway porphyrin-containing compound metabolism; protoporphyrin-IX biosynthesis; coproporphyrinogen-III from 5-aminolevulinate: step 2/4. Functionally, tetrapolymerization of the monopyrrole PBG into the hydroxymethylbilane pre-uroporphyrinogen in several discrete steps. This chain is Porphobilinogen deaminase, found in Burkholderia mallei (strain NCTC 10247).